A 200-amino-acid chain; its full sequence is COMM domain-containing protein 7 (200 aa).

The COMM domain maps to 133–200; that stretch reads QLIDMEWRFG…RVRASMECLS (68 aa).

Belongs to the COMM domain-containing protein 7 family. In terms of assembly, component of the commander complex consisting of the CCC subcomplex and the retriever subcomplex. Component of the CCC (COMMD/CCDC22/CCDC93) subcomplex consisting of COMMD1, COMMD2, COMMD3, COMMD4, COMMD5, COMMD6, COMMD7, COMMD8, COMMD9, COMMD10, CCDC22 and CCDC93; within the complex forms a heterodimer with COMMD9. Interacts with RELA. Interacts with CCDC22, CCDC93, SCNN1B, CUL7.

It localises to the cytoplasmic vesicle. Functionally, scaffold protein in the commander complex that is essential for endosomal recycling of transmembrane cargos; the commander complex is composed of the CCC subcomplex and the retriever subcomplex. May modulate activity of cullin-RING E3 ubiquitin ligase (CRL) complexes. Associates with the NF-kappa-B complex and suppresses its transcriptional activity. This Mus musculus (Mouse) protein is COMM domain-containing protein 7 (Commd7).